Consider the following 129-residue polypeptide: Small ribosomal subunit protein uS11 (129 aa).

Belongs to the universal ribosomal protein uS11 family. Part of the 30S ribosomal subunit. Interacts with proteins S7 and S18. Binds to IF-3.

Located on the platform of the 30S subunit, it bridges several disparate RNA helices of the 16S rRNA. Forms part of the Shine-Dalgarno cleft in the 70S ribosome. The sequence is that of Small ribosomal subunit protein uS11 from Pseudomonas putida (strain GB-1).